The following is a 187-amino-acid chain: MSFAMLRPAAGRYLYPEISMLSEDEENGSESSGSDEKPFHLDADGFGIKAGKRRSGKKAGRLHREPRQRHTANARERDRTNSVNTAFTALRTLIPTEPADRKLSKIETLRLASSYISHLGNVLLVGEACGDGQPCHTSPAFFHHGGGGGSPPPRDSENSQPKQICTFCLSNQRKLSKDRDRKTAIRS.

Disordered stretches follow at residues 21 to 83 (LSED…TNSV) and 140 to 163 (AFFH…QPKQ). A compositionally biased stretch (basic and acidic residues) spans 34-43 (SDEKPFHLDA). A compositionally biased stretch (basic residues) spans 50 to 72 (AGKRRSGKKAGRLHREPRQRHTA). The region spanning 67–119 (RQRHTANARERDRTNSVNTAFTALRTLIPTEPADRKLSKIETLRLASSYISHL) is the bHLH domain.

In terms of assembly, efficient DNA binding requires dimerization with another bHLH protein. Dimerizes and binds the E-box consensus sequence with E12. In terms of tissue distribution, expressed in the intersomitic, the superficial proximomedial limb mesenchyme and the subectodermal mesenchyme.

It is found in the nucleus. Plays an early essential role in mesoderm formation, as well as a later role in formation of somite-derived chondrogenic lineages. In Gallus gallus (Chicken), this protein is Basic helix-loop-helix transcription factor scleraxis (SCX).